The sequence spans 356 residues: Pavine N-methyltransferase (356 aa).

Residues F96, S97, G135, N159, Q163, D185, V186, and V201 each contribute to the S-adenosyl-L-homocysteine site. Residues F96, S97, G135, N159, Q163, D185, V186, and V201 each coordinate S-adenosyl-L-methionine. E205 is a (S)-tetrahydropapaverine binding site. C331 is an active-site residue.

Belongs to the CFA/CMAS family. Homodimer.

Its subcellular location is the cytoplasm. It catalyses the reaction (+-)-pavine + S-adenosyl-L-methionine = N-methylpavine + S-adenosyl-L-homocysteine + H(+). The enzyme catalyses (S)-reticuline + S-adenosyl-L-methionine = (S)-tembetarine + S-adenosyl-L-homocysteine + H(+). It carries out the reaction (S)-stylopine + S-adenosyl-L-methionine = (S)-cis-N-methylstylopine + S-adenosyl-L-homocysteine. The catalysed reaction is (S)-scoulerine + S-adenosyl-L-methionine = (S)-cis-N-methylscoulerine + S-adenosyl-L-homocysteine. It catalyses the reaction (S)-tetrahydropapaverine + S-adenosyl-L-methionine = (S)-N-methyltetrahydropapaverine + S-adenosyl-L-homocysteine + H(+). The enzyme catalyses (S)-tetrahydropalmatine + S-adenosyl-L-methionine = (S)-cis-N-methyltetrahydropalmatine + S-adenosyl-L-homocysteine. It functions in the pathway alkaloid biosynthesis. With respect to regulation, in the presence of a racemic mixture of tetrahydropapaverine (THP), one molecule of (S)-THP binds in a productive mode, while one molecule of (R)-THP is bound next to it in a non-productive mode. The (R)-THP seems to inhibit the release of products from the enzyme when higher concentrations of the racemic substrate are added to the reaction. Its function is as follows. N-methyltransferase with a substrate preference for (+-)-pavine and (S)-reticuline, but also active with the protoberberines scoulerine and stylopine and, to a lesser extent, tetrahydropapaverine (THP) and tetrahydropalmatine. Is not active on (R)-reticuline, cryptopine, glaucine, codeine, canadaline, noscapine and berbamine. The polypeptide is Pavine N-methyltransferase (Thalictrum flavum subsp. glaucum (Yellow meadow rue)).